The chain runs to 621 residues: Pentatricopeptide repeat-containing protein At3g48250, chloroplastic (621 aa).

The transit peptide at 1–67 (MYRSMAILSS…SKPDSMLQLV (67 aa)) directs the protein to the chloroplast. PPR repeat units follow at residues 122-156 (STPL…GFYL), 157-194 (DEDT…NAMS), 262-296 (STVT…GYDM), 297-331 (DLDT…PFKP), 332-368 (SIQD…GKSL), 369-403 (SKAV…GYEP), 404-438 (DNIT…GCFP), 439-473 (DIKT…GFDI), 474-509 (DSNL…NVKP), and 510-544 (WQST…NYPA).

This sequence belongs to the PPR family. P subfamily.

It localises to the plastid. The protein resides in the chloroplast. This is Pentatricopeptide repeat-containing protein At3g48250, chloroplastic from Arabidopsis thaliana (Mouse-ear cress).